The chain runs to 284 residues: Acetylglutamate kinase (284 aa).

Residues 64 to 65 (GG), Arg-86, and Asn-179 each bind substrate.

Belongs to the acetylglutamate kinase family. ArgB subfamily.

The protein resides in the cytoplasm. The catalysed reaction is N-acetyl-L-glutamate + ATP = N-acetyl-L-glutamyl 5-phosphate + ADP. It participates in amino-acid biosynthesis; L-arginine biosynthesis; N(2)-acetyl-L-ornithine from L-glutamate: step 2/4. Functionally, catalyzes the ATP-dependent phosphorylation of N-acetyl-L-glutamate. This is Acetylglutamate kinase from Prochlorococcus marinus subsp. pastoris (strain CCMP1986 / NIES-2087 / MED4).